The following is a 314-amino-acid chain: Putative gluconeogenesis factor (314 aa).

It belongs to the gluconeogenesis factor family.

It localises to the cytoplasm. Required for morphogenesis under gluconeogenic growth conditions. This Thermotoga maritima (strain ATCC 43589 / DSM 3109 / JCM 10099 / NBRC 100826 / MSB8) protein is Putative gluconeogenesis factor.